Reading from the N-terminus, the 2039-residue chain is Methylcytosine dioxygenase TET1 (2039 aa).

Residues 1 to 19 (MSRSRPAKPSKSVKTKLQK) are compositionally biased toward basic residues. Disordered stretches follow at residues 1-79 (MSRS…AGAA), 119-168 (VVTP…NGEQ), and 227-286 (DNEC…GFPD). Basic and acidic residues-rich tracts occupy residues 53–65 (KRRDGKKETEDKT) and 138–149 (IQDEPGVKHSEN). 2 stretches are compositionally biased toward polar residues: residues 150–168 (DSVPSQHATVSPGTENGEQ) and 241–265 (QRSTSEVTSQKNTSNQLADLSSQVE). The segment at 512-657 (LDLTQGSQAA…NGPKSESMDC (146 aa)) is sufficient for binding to genomic CpG islands. A CXXC-type zinc finger spans residues 567–608 (ERRKRKACGVCEPCQQKANCGECTYCKNRKNSHQICKKRKCE). Cys574, Cys577, Cys580, Cys586, Cys589, Cys592, Cys602, and Cys607 together coordinate Zn(2+). Disordered stretches follow at residues 613-670 (KPEA…QRLD), 711-735 (CDANLTGVENPQPSEDDKQQTNPSP), 820-859 (GAEPTIFNNHPNTHSAGSRPHPPEKVPNKEPKDGSPVQPS), 882-906 (QLSEAPSESSSPSKPEKDEEAHQKT), 964-993 (QGYPSSPTAEKKGAAGGRAPFDGFENSHPL), 1050-1129 (VRNA…KKQE), 1209-1240 (VEPSDSLPTCQFKTESGGQTFAEPADNSQGQP), and 1322-1341 (KREAQTSSNGPLGPTTDSAQ). Residues 653-670 (ESMDCSRRGHGEEEQRLD) are compositionally biased toward basic and acidic residues. Over residues 825-835 (IFNNHPNTHSA) the composition is skewed to polar residues. The span at 840–852 (HPPEKVPNKEPKD) shows a compositional bias: basic and acidic residues. Ser854 carries the post-translational modification Phosphoserine. A compositionally biased stretch (low complexity) spans 884–894 (SEAPSESSSPS). Residues 895–904 (KPEKDEEAHQ) show a composition bias toward basic and acidic residues. Polar residues predominate over residues 1053–1064 (AESTPESLVAKN). Residues 1094-1116 (KPKKAQKKARATPHANKRKKKPP) show a composition bias toward basic residues. Composition is skewed to polar residues over residues 1214 to 1227 (SLPTCQFKTESGGQ) and 1326 to 1341 (QTSSNGPLGPTTDSAQ). Zn(2+)-binding residues include Cys1371, Cys1373, Cys1430, His1456, and Cys1458. 2-oxoglutarate is bound at residue Arg1499. Zn(2+) is bound by residues Cys1509, Cys1511, Cys1527, and Cys1536. Residues 1528–1541 (SWSMYFNGCKFGRS) form an interaction with DNA region. Lys1537 is covalently cross-linked (Glycyl lysine isopeptide (Lys-Gly) (interchain with G-Cter in ubiquitin)). A Zn(2+)-binding site is contributed by Cys1628. Cys1644 contributes to the 2-oxoglutarate binding site. Residue His1650 coordinates Zn(2+). Residues His1652 and Asp1654 each coordinate Fe cation. Asn1657 is a binding site for substrate. Position 1685 (His1685) interacts with 2-oxoglutarate. Basic residues predominate over residues 1734 to 1743 (GKRAKMKQNH). Disordered stretches follow at residues 1734-1760 (GKRAKMKQNHNKSGSHNTKSFSSASST) and 1830-1901 (AAHP…LPQL). Residues 1748 to 1760 (SHNTKSFSSASST) are compositionally biased toward low complexity. The segment covering 1850-1875 (TSPSEQLTSNQSNQQLPLLSNSQKLA) has biased composition (polar residues). A compositionally biased stretch (basic and acidic residues) spans 1880 to 1895 (EDERHPEADEPQHPED). His1939 is a Fe cation binding site. 1954-1956 (RVS) contributes to the 2-oxoglutarate binding site. 1960-1962 (YQH) lines the substrate pocket. His1970 is a binding site for Zn(2+).

The protein belongs to the TET family. In terms of assembly, interacts with SIN3A; recruits the transcriptional co-repressor SIN3A to gene promoters. Interacts with HCFC1. Interacts (via C-terminus) with OGT. Found in a complex composed of at least SINHCAF, SIN3A, HDAC1, SAP30, RBBP4, OGT and TET1. Interacts with QSER1. Interacts with NONO (via DNA-binding domain); this interaction recruits TET1 to genomic loci. Interacts with FOXA2; this interaction may recruit TET1 to specific enhancers to preserve their unmethylated status and hence allowing gene expression. Interacts with RNF2. Directly interacts (via C-terminus) with the DCAF1 component of the CRL4(VprBP) E3 ubiquitin-protein ligase complex. As to quaternary structure, interacts with UHRF1; this interaction induces the recruitment of TET1 to replicating heterochromatin. Interacts with DCAF1. Fe(2+) serves as cofactor. It depends on Zn(2+) as a cofactor. In terms of processing, glycosylated. Interaction with OGT leads to GlcNAcylation. Monoubiquitinated by the DCX (DDB1-CUL4-X-box) E3 ubiquitin-protein ligase complex called CRL4(VprBP) or CUL4A-RBX1-DDB1-DCAF1/VPRBP complex. Post-translationally, monoubiquitinated by the DCX (DDB1-CUL4-X-box) E3 ubiquitin-protein ligase complex called CRL4(VprBP) or CUL4A-RBX1-DDB1-DCAF1/VPRBP complex; this modification promotes binding to DNA. Expressed in germinal vesicle (GV) stage and MII-stage oocytes and in early embryos. Also detected somatic tissues, including brain, liver and kidney, but at very low levels. In terms of tissue distribution, predominantly expressed in early embryos. Also expressed in embryonic stem cells and in primordial germ cells. Expressed in adult tissues, including brain cortex, cerebellum, heart, kidney, liver, muscle and spleen, although at much lower levels than isoform 2. In the brain, expressed at higher levels in glial cells than in neurons. Expressed in placenta. Expressed in the pituitary, most probably in thyrotropes. As to expression, preferentially expressed in differentiated cells, including in cerebral cortex, cerebellum and thymus. Also expressed in heart, kidney, liver, muscle and spleen at much higher levels than isoform 1. In the brain, expressed at higher levels in neurons than in glial cells. Expressed in the olfactory bulb and in the mammary gland.

It localises to the nucleus. The protein resides in the chromosome. The enzyme catalyses a 5-methyl-2'-deoxycytidine in DNA + 2-oxoglutarate + O2 = a 5-hydroxymethyl-2'-deoxycytidine in DNA + succinate + CO2. It catalyses the reaction a 5-hydroxymethyl-2'-deoxycytidine in DNA + 2-oxoglutarate + O2 = a 5-formyl-2'-deoxycytidine in DNA + succinate + CO2 + H2O. The catalysed reaction is a 5-formyl-2'-deoxycytidine in DNA + 2-oxoglutarate + O2 = a 5-carboxyl-2'-deoxycytidine in DNA + succinate + CO2 + H(+). Dioxygenase that plays a key role in active DNA demethylation, by catalyzing the sequential oxidation of the modified genomic base 5-methylcytosine (5mC) into 5-hydroxymethylcytosine (5hmC), 5-formylcytosine (5fC), and 5-carboxylcytosine (5caC). In addition to its role in DNA demethylation, plays a more general role in chromatin regulation by recruiting histone modifying protein complexes to alter histone marks and chromatin accessibility, leading to both activation and repression of gene expression. Plays therefore a role in many biological processes, including stem cell maintenance, T- and B-cell development, inflammation regulation, iron homeostasis, neural activity or DNA repair. Involved in the balance between pluripotency and lineage commitment of cells it plays a role in embryonic stem cells maintenance and inner cell mass cell specification. Together with QSER1, plays an essential role in the protection and maintenance of transcriptional and developmental programs to inhibit the binding of DNMT3A/3B and therefore de novo methylation. May play a role in the pancreatic beta-cell specification during development. In this context, may function as an upstream epigenetic regulator of PAX4 presumably through direct recruitment by FOXA2 to a PAX4 enhancer to preserve its unmethylated status, thereby potentiating PAX4 expression to adopt beta-cell fate during endocrine lineage commitment. Under DNA hypomethylation conditions, such as in female meiotic germ cells, may induce epigenetic reprogramming of pericentromeric heterochromatin (PCH), the constitutive heterochromatin of pericentromeric regions. PCH forms chromocenters in the interphase nucleus and chromocenters cluster at the prophase of meiosis. In this context, may also be essential for chromocenter clustering in a catalytic activity-independent manner, possibly through the recruitment polycomb repressive complex 1 (PRC1) to the chromocenters. During embryonic development, may be required for normal meiotic progression in oocytes and meiotic gene activation. Binds preferentially to DNA containing cytidine-phosphate-guanosine (CpG) dinucleotides over CpH (H=A, T, and C), hemimethylated-CpG and hemimethylated-hydroxymethyl-CpG. Its function is as follows. Dioxygenase that plays a key role in active DNA demethylation. Binds to promoters, particularly to those with high CG content. In hippocampal neurons, isoform 1 regulates the expression of a unique subset of genes compared to isoform 2, although some overlap between both isoforms, hence differentially regulates excitatory synaptic transmission. In hippocampal neuron cell cultures, isoform 1 controls both miniature excitatory postsynaptic current amplitude and frequency. Isoform 1 may regulate genes involved in hippocampal-dependent memory, leading to positive regulation of memory, contrary to isoform 2 that may decrease memory. Functionally, dioxygenase that plays a key role in active DNA demethylation. As isoform 1, binds to promoters, particularly to those with high CG content, however displays reduced global chromatin affinity compared with isoform 1, leading to decreased global DNA demethylation compared with isoform 1. Contrary to isoform 1, isoform 2 localizes during S phase to sites of ongoing DNA replication in heterochromatin, causing a significant de novo 5hmC formation, globally, and more so in heterochromatin, including LINE 1 interspersed DNA repeats leading to their activation. In hippocampal neurons, isoform 2 regulates the expression of a unique subset of genes compared with isoform 1, although some overlap between both isoforms, hence differentially regulating excitatory synaptic transmission. In hippocampal neuron cell cultures, isoform 2 controls miniature excitatory postsynaptic current frequency, but not amplitude. Isoform 2 may regulate genes involved in hippocampal-dependent memory, leading to negative regulation of memory, contrary to isoform 1 that may improve memory. In immature and partially differentiated gonadotrope cells, represses luteinizing hormone gene LHB expression directly and does not catalyze 5hmC at the gene promoter. This Mus musculus (Mouse) protein is Methylcytosine dioxygenase TET1 (Tet1).